We begin with the raw amino-acid sequence, 524 residues long: REH2-associated factor 1 (524 aa).

Residues 1–22 (MRRWLVASMAPQLHQLLQPVRR) constitute a mitochondrion transit peptide. Residues 48 to 70 (ASCPACSRVVHMCDMLTHLITAH) form a C2H2-type 1; atypical zinc finger. Residues 121-147 (YMCNWCDRRSDVYATRDKFLKHVADVH) form a C2H2-type 2; atypical zinc finger. Residues 226 to 249 (FPCELCNRTFNSEIDLLQHLETRH) form a C2H2-type 4 zinc finger. Residues 286–312 (VICDLCVSSSKVYKMPSALFSHIRFKH) form a C2H2-type 3; atypical zinc finger. 4 consecutive C2H2-type zinc fingers follow at residues 334–357 (FVCTVCQKAFASAAALDGHFNSKH), 376–399 (WWCHDCEKGFSSAKGLHGHMQNKH), 406–429 (HPCPACKRVFADIYSLEEHLSLQH), and 443–465 (VKCSTCERFFLSHEDLHRHAVKH). The disordered stretch occupies residues 463 to 524 (VKHHKKDPRA…KTTEVSEVTS (62 aa)). Over residues 479-500 (APTSASHVAASTSAAVPSEVEA) the composition is skewed to low complexity.

In terms of assembly, component of the REH2-associated complex (REH2C) composed of helicase REH2, associated factors H2F1 and H2F2, and mRNAs at various editing stages; the formation of the complex is RNA-independent. Within the complex, interacts with REH2; the interaction is direct. Interacts with various editing complexes including the RNA editing core (RECC) complex, the gRNA-binding (GRBC) complex (also known as the MRB1 complex) and the RNA editing mediator (REMC) complex.

Its subcellular location is the mitochondrion. In terms of biological role, plays an important role in mitochondrial mRNA editing by promoting the assembly of the mRNA editosome. Facilitates the recruitment of mRNA to the REH2C complex and promotes the interaction between various editing complexes including REH2C, GRBC, REMC and RECC complexes. This Trypanosoma brucei brucei (strain 927/4 GUTat10.1) protein is REH2-associated factor 1.